Consider the following 259-residue polypeptide: Eukaryotic translation initiation factor 3 subunit G-2 (259 aa).

The 79-residue stretch at 179–257 (SAVRISNLSE…LILSVEWSKP (79 aa)) folds into the RRM domain.

The protein belongs to the eIF-3 subunit G family. As to quaternary structure, component of the eukaryotic translation initiation factor 3 (eIF-3) complex. The eIF-3 complex interacts with pix.

It is found in the cytoplasm. In terms of biological role, RNA-binding component of the eukaryotic translation initiation factor 3 (eIF-3) complex, which is involved in protein synthesis of a specialized repertoire of mRNAs and, together with other initiation factors, stimulates binding of mRNA and methionyl-tRNAi to the 40S ribosome. The eIF-3 complex specifically targets and initiates translation of a subset of mRNAs involved in cell proliferation. This subunit can bind 18S rRNA. This chain is Eukaryotic translation initiation factor 3 subunit G-2, found in Drosophila virilis (Fruit fly).